The sequence spans 222 residues: Glutathione S-transferase (222 aa).

The GST N-terminal domain maps to 3-83 (GKPKLHYTRG…YIAGKYNLYG (81 aa)). Residues Tyr9, Arg45, 54 to 55 (QV), and 67 to 68 (QS) contribute to the glutathione site. One can recognise a GST C-terminal domain in the interval 85 to 208 (DLKERAWIDM…QPGSQRKPPL (124 aa)).

Belongs to the GST superfamily. Alpha family. Homodimer.

It localises to the cytoplasm. It catalyses the reaction RX + glutathione = an S-substituted glutathione + a halide anion + H(+). Its function is as follows. Conjugation of reduced glutathione to a wide number of exogenous and endogenous hydrophobic electrophiles. The chain is Glutathione S-transferase from Gallus gallus (Chicken).